Consider the following 370-residue polypeptide: Ribosomal RNA small subunit methyltransferase H (370 aa).

Residues 85 to 87 (GGH), Asp-104, Tyr-131, Asp-152, and Gln-159 each bind S-adenosyl-L-methionine. Basic and acidic residues-rich tracts occupy residues 332–345 (GAERATPEEIERNP) and 353–370 (RALEKVAGRPTTARRDAR). The disordered stretch occupies residues 332 to 370 (GAERATPEEIERNPRSAPVRLRALEKVAGRPTTARRDAR).

This sequence belongs to the methyltransferase superfamily. RsmH family.

Its subcellular location is the cytoplasm. It carries out the reaction cytidine(1402) in 16S rRNA + S-adenosyl-L-methionine = N(4)-methylcytidine(1402) in 16S rRNA + S-adenosyl-L-homocysteine + H(+). Specifically methylates the N4 position of cytidine in position 1402 (C1402) of 16S rRNA. The polypeptide is Ribosomal RNA small subunit methyltransferase H (Mycobacterium sp. (strain KMS)).